Consider the following 270-residue polypeptide: Formamidopyrimidine-DNA glycosylase (270 aa).

The active-site Schiff-base intermediate with DNA is proline 2. Glutamate 3 acts as the Proton donor in catalysis. Lysine 58 serves as the catalytic Proton donor; for beta-elimination activity. 3 residues coordinate DNA: histidine 91, arginine 110, and arginine 151. An FPG-type zinc finger spans residues 236–270; sequence FVYGRGGEFCKSCGSTLREIRLGQRASVYCSRCQR. The active-site Proton donor; for delta-elimination activity is arginine 260.

This sequence belongs to the FPG family. Monomer. Requires Zn(2+) as cofactor.

The catalysed reaction is Hydrolysis of DNA containing ring-opened 7-methylguanine residues, releasing 2,6-diamino-4-hydroxy-5-(N-methyl)formamidopyrimidine.. It catalyses the reaction 2'-deoxyribonucleotide-(2'-deoxyribose 5'-phosphate)-2'-deoxyribonucleotide-DNA = a 3'-end 2'-deoxyribonucleotide-(2,3-dehydro-2,3-deoxyribose 5'-phosphate)-DNA + a 5'-end 5'-phospho-2'-deoxyribonucleoside-DNA + H(+). Functionally, involved in base excision repair of DNA damaged by oxidation or by mutagenic agents. Acts as a DNA glycosylase that recognizes and removes damaged bases. Has a preference for oxidized purines, such as 7,8-dihydro-8-oxoguanine (8-oxoG). Has AP (apurinic/apyrimidinic) lyase activity and introduces nicks in the DNA strand. Cleaves the DNA backbone by beta-delta elimination to generate a single-strand break at the site of the removed base with both 3'- and 5'-phosphates. The polypeptide is Formamidopyrimidine-DNA glycosylase (Stutzerimonas stutzeri (strain A1501) (Pseudomonas stutzeri)).